Here is a 587-residue protein sequence, read N- to C-terminus: ATP-dependent lipid A-core flippase (587 aa).

5 helical membrane passes run 31–51 (LIAS…LIYL), 68–88 (LKIM…TNFI), 145–165 (GSLI…AVMF), 169–189 (WELT…ITIV), and 259–279 (VQII…TPLI). The ABC transmembrane type-1 domain occupies 32–315 (IASGIALVFN…LTNVNSQFQR (284 aa)). One can recognise an ABC transporter domain in the interval 347-583 (LEFKNVSFAY…NGAYKQLYSM (237 aa)). 381 to 388 (GRSGSGKS) provides a ligand contact to ATP.

Belongs to the ABC transporter superfamily. Lipid exporter (TC 3.A.1.106) family. Homodimer.

It is found in the cell inner membrane. The catalysed reaction is ATP + H2O + lipid A-core oligosaccharideSide 1 = ADP + phosphate + lipid A-core oligosaccharideSide 2.. In terms of biological role, involved in lipopolysaccharide (LPS) biosynthesis. Translocates lipid A-core from the inner to the outer leaflet of the inner membrane. Transmembrane domains (TMD) form a pore in the inner membrane and the ATP-binding domain (NBD) is responsible for energy generation. This chain is ATP-dependent lipid A-core flippase, found in Haemophilus influenzae (strain 86-028NP).